A 347-amino-acid polypeptide reads, in one-letter code: UDP-galactose/UDP-glucose transporter 5 (347 aa).

A run of 8 helical transmembrane segments spans residues Leu-17–Leu-37, Leu-57–Ala-77, Val-116–Met-136, Phe-143–Ala-163, Thr-177–Phe-197, Ile-218–Val-238, Cys-247–Tyr-267, and Cys-293–Gly-313. Residues Ser-325–Pro-347 are disordered.

The protein belongs to the nucleotide-sugar transporter family. UDP-galactose:UMP antiporter (TC 2.A.7.11) subfamily.

The protein resides in the membrane. Sugar transporter involved in the transport of nucleotide-sugars from cytoplasm into the Golgi and/or the endoplasmic reticulum. The chain is UDP-galactose/UDP-glucose transporter 5 from Arabidopsis thaliana (Mouse-ear cress).